The primary structure comprises 459 residues: Aluminum-activated malate transporter 1 (459 aa).

Residues 1–52 (MDIDHGRESDGEMVGTIASCGLLLHSLLAGLGRRAAGFARKVGGAAREDPRR) lie on the Extracellular side of the membrane. 2 helical membrane passes run 53 to 73 (VAHS…YFVT) and 74 to 94 (PLFN…VVVM). Over 95-108 (EYTVGATLSKGLNR) the chain is Extracellular. The helical transmembrane segment at 109 to 129 (ALATLVAGCIAVGAHQLAELA) threads the bilayer. The Cytoplasmic portion of the chain corresponds to 130-137 (ERCGDQGE). Residues 138–158 (PIVLTVLVFFVASAATFLRFI) form a helical membrane-spanning segment. Topologically, residues 159–160 (PE) are extracellular. The chain crosses the membrane as a helical span at residues 161–181 (IKAKYDYGVTIFILTFGLVAV). The Cytoplasmic portion of the chain corresponds to 182 to 199 (SSYRVEELIQLAHQRFYT). The chain crosses the membrane as a helical span at residues 200–220 (IAVGVFICLCTTVFLFPVWAG). Residues 221-459 (EDVHKLASGN…DEPLPDVVIL (239 aa)) are Extracellular-facing.

This sequence belongs to the aromatic acid exporter (TC 2.A.85) family. As to expression, detected in root tips.

The protein localises to the cell membrane. Activated by external aluminum. The enhancement of malate transport is not due to alteration in the selectivity properties but is due to an increased anion permeability. Functionally, malate transporter critical for aluminum tolerance. Permeable to chloride, nitrate, sulfate and malate. This is Aluminum-activated malate transporter 1 (ALMT1) from Triticum aestivum (Wheat).